Reading from the N-terminus, the 144-residue chain is Na(+)/H(+) antiporter subunit B (144 aa).

The next 4 helical transmembrane spans lie at Val9–Phe31, Phe41–Phe58, Ile75–Leu97, and Ala117–Ile139.

This sequence belongs to the CPA3 antiporters (TC 2.A.63) subunit B family. As to quaternary structure, forms a heterooligomeric complex that consists of seven subunits: MrpA, MrpB, MrpC, MrpD, MrpE, MrpF and MrpG.

It localises to the cell membrane. In terms of biological role, mnh complex is a Na(+)Li(+)/H(+) antiporter involved in Na(+) and/or Li(+) excretion and Na(+) resistance. Na(+)/H(+) antiport consumes a transmembrane electrical potential, and is thus inferred to be electrogenic. Does not transport K(+), Ca(2+) or Mg(2+). This is Na(+)/H(+) antiporter subunit B (mrpB) from Alkalihalophilus pseudofirmus (strain ATCC BAA-2126 / JCM 17055 / OF4) (Bacillus pseudofirmus).